A 131-amino-acid chain; its full sequence is Small ribosomal subunit protein uS8 (131 aa).

Belongs to the universal ribosomal protein uS8 family. In terms of assembly, part of the 30S ribosomal subunit. Contacts proteins S5 and S12.

Its function is as follows. One of the primary rRNA binding proteins, it binds directly to 16S rRNA central domain where it helps coordinate assembly of the platform of the 30S subunit. This is Small ribosomal subunit protein uS8 from Geobacillus stearothermophilus (Bacillus stearothermophilus).